Here is a 567-residue protein sequence, read N- to C-terminus: DNA ligase B (567 aa).

Catalysis depends on K132, which acts as the N6-AMP-lysine intermediate.

The protein belongs to the NAD-dependent DNA ligase family. LigB subfamily.

The enzyme catalyses NAD(+) + (deoxyribonucleotide)n-3'-hydroxyl + 5'-phospho-(deoxyribonucleotide)m = (deoxyribonucleotide)n+m + AMP + beta-nicotinamide D-nucleotide.. Functionally, catalyzes the formation of phosphodiester linkages between 5'-phosphoryl and 3'-hydroxyl groups in double-stranded DNA using NAD as a coenzyme and as the energy source for the reaction. This is DNA ligase B from Yersinia pestis bv. Antiqua (strain Angola).